Consider the following 463-residue polypeptide: L-2-hydroxyglutarate dehydrogenase, mitochondrial (463 aa).

A mitochondrion-targeting transit peptide spans 1–52; that stretch reads MVPALRYLGSVCGRARGIFPGGFSAAHTPASGKSRLLCQGGRRASTSSFDIV. N6-acetyllysine is present on residues lysine 104 and lysine 173.

It belongs to the L2HGDH family. FAD is required as a cofactor.

The protein resides in the mitochondrion. The enzyme catalyses (S)-2-hydroxyglutarate + A = 2-oxoglutarate + AH2. This is L-2-hydroxyglutarate dehydrogenase, mitochondrial (L2HGDH) from Bos taurus (Bovine).